A 674-amino-acid chain; its full sequence is Alpha-L-arabinofuranosidase 2 (674 aa).

An N-terminal signal peptide occupies residues 1–24; it reads MDMETSWRFLRSVCLLSFILGSFS. Residues asparagine 48, asparagine 180, asparagine 199, asparagine 210, asparagine 361, asparagine 522, and asparagine 548 are each glycosylated (N-linked (GlcNAc...) asparagine).

Belongs to the glycosyl hydrolase 51 family. In terms of tissue distribution, high expression in flowers, siliques and stems. Observed in the vasculature of older root tissue, at the tip of anthers and in the petal blade of fully developed flowers, in floral abscission zones and in silique replum tissue. Expressed in the cambium and phloem, but not in the xylem or in the vascular system of floral tissues.

It localises to the secreted. The protein localises to the extracellular space. The protein resides in the extracellular matrix. The catalysed reaction is Hydrolysis of terminal non-reducing alpha-L-arabinofuranoside residues in alpha-L-arabinosides.. In terms of biological role, may be involved in the coordinated dissolution of the cell wall matrix during abscission and in the secondary cell wall formation in xylem vessels. The sequence is that of Alpha-L-arabinofuranosidase 2 (ASD2) from Arabidopsis thaliana (Mouse-ear cress).